The chain runs to 944 residues: E3 ubiquitin-protein ligase HACE1 (944 aa).

7 ANK repeats span residues 23-55 (LPED…NSKF), 64-93 (VKRS…DPNY), 97-126 (SGCT…DVNI), 130-159 (EGLT…NVDV), 163-192 (MGQT…DINR), 196-226 (SGAT…YLPD), and 228-253 (NGVT…QHHP). In terms of domain architecture, HECT spans 609-944 (NCEKLKQGIA…HCGSYGYTMA (336 aa)). Residue Cys911 is the Glycyl thioester intermediate of the active site.

The protein resides in the golgi apparatus. It localises to the golgi stack membrane. The protein localises to the cytoplasm. Its subcellular location is the endoplasmic reticulum. It catalyses the reaction S-ubiquitinyl-[E2 ubiquitin-conjugating enzyme]-L-cysteine + [acceptor protein]-L-lysine = [E2 ubiquitin-conjugating enzyme]-L-cysteine + N(6)-ubiquitinyl-[acceptor protein]-L-lysine.. The protein operates within protein modification; protein ubiquitination. Functionally, E3 ubiquitin-protein ligase involved in Golgi membrane fusion and regulation of small GTPases. Acts as a regulator of Golgi membrane dynamics during the cell cycle: recruited to Golgi membrane by Rab proteins and regulates postmitotic Golgi membrane fusion. Acts by mediating ubiquitination during mitotic Golgi disassembly, ubiquitination serving as a signal for Golgi reassembly later, after cell division. In Xenopus laevis (African clawed frog), this protein is E3 ubiquitin-protein ligase HACE1 (hace1).